Here is a 203-residue protein sequence, read N- to C-terminus: GTP cyclohydrolase-2 (203 aa).

49–53 serves as a coordination point for GTP; sequence RIHSE. Residues cysteine 54, cysteine 65, and cysteine 67 each contribute to the Zn(2+) site. GTP-binding positions include glutamine 70, 92–94, and threonine 114; that span reads EGR. The Proton acceptor role is filled by aspartate 126. Arginine 128 serves as the catalytic Nucleophile. GTP contacts are provided by threonine 149 and lysine 154.

It belongs to the GTP cyclohydrolase II family. Zn(2+) is required as a cofactor.

It catalyses the reaction GTP + 4 H2O = 2,5-diamino-6-hydroxy-4-(5-phosphoribosylamino)-pyrimidine + formate + 2 phosphate + 3 H(+). It functions in the pathway cofactor biosynthesis; riboflavin biosynthesis; 5-amino-6-(D-ribitylamino)uracil from GTP: step 1/4. Its function is as follows. Catalyzes the conversion of GTP to 2,5-diamino-6-ribosylamino-4(3H)-pyrimidinone 5'-phosphate (DARP), formate and pyrophosphate. The sequence is that of GTP cyclohydrolase-2 from Shewanella sp. (strain W3-18-1).